Consider the following 537-residue polypeptide: Phosphoenolpyruvate carboxykinase (ATP) (537 aa).

The substrate site is built by R61, Y195, and K201. Residues K201, H220, and 236–244 each bind ATP; that span reads GLSGTGKTT. Mn(2+) is bound by residues K201 and H220. D257 is a Mn(2+) binding site. E285, R323, and T448 together coordinate ATP. A substrate-binding site is contributed by R323.

It belongs to the phosphoenolpyruvate carboxykinase (ATP) family. It depends on Mn(2+) as a cofactor.

The protein localises to the cytoplasm. It carries out the reaction oxaloacetate + ATP = phosphoenolpyruvate + ADP + CO2. The protein operates within carbohydrate biosynthesis; gluconeogenesis. Its function is as follows. Involved in the gluconeogenesis. Catalyzes the conversion of oxaloacetate (OAA) to phosphoenolpyruvate (PEP) through direct phosphoryl transfer between the nucleoside triphosphate and OAA. This chain is Phosphoenolpyruvate carboxykinase (ATP), found in Rhodopseudomonas palustris (strain ATCC BAA-98 / CGA009).